The following is a 101-amino-acid chain: Small ribosomal subunit protein uS14 (101 aa).

The segment at 53 to 72 (RDAAAVRVRNRDSHDGRPRG) is disordered. Residues 61–70 (RNRDSHDGRP) are compositionally biased toward basic and acidic residues.

It belongs to the universal ribosomal protein uS14 family. As to quaternary structure, part of the 30S ribosomal subunit. Contacts proteins S3 and S10.

Binds 16S rRNA, required for the assembly of 30S particles and may also be responsible for determining the conformation of the 16S rRNA at the A site. This chain is Small ribosomal subunit protein uS14, found in Corynebacterium glutamicum (strain ATCC 13032 / DSM 20300 / JCM 1318 / BCRC 11384 / CCUG 27702 / LMG 3730 / NBRC 12168 / NCIMB 10025 / NRRL B-2784 / 534).